We begin with the raw amino-acid sequence, 317 residues long: Ribonuclease Z (317 aa).

His-61, His-63, Asp-65, His-66, His-153, Asp-221, and His-280 together coordinate Zn(2+). The active-site Proton acceptor is Asp-65.

It belongs to the RNase Z family. As to quaternary structure, homodimer. Zn(2+) is required as a cofactor.

The catalysed reaction is Endonucleolytic cleavage of RNA, removing extra 3' nucleotides from tRNA precursor, generating 3' termini of tRNAs. A 3'-hydroxy group is left at the tRNA terminus and a 5'-phosphoryl group is left at the trailer molecule.. Zinc phosphodiesterase, which displays some tRNA 3'-processing endonuclease activity. Probably involved in tRNA maturation, by removing a 3'-trailer from precursor tRNA. The polypeptide is Ribonuclease Z (Alkaliphilus oremlandii (strain OhILAs) (Clostridium oremlandii (strain OhILAs))).